The sequence spans 210 residues: Phosphoenolpyruvate guanylyltransferase (210 aa).

3 residues coordinate phosphoenolpyruvate: T130, G146, and S149.

Belongs to the CofC family.

The catalysed reaction is phosphoenolpyruvate + GTP + H(+) = enolpyruvoyl-2-diphospho-5'-guanosine + diphosphate. It functions in the pathway cofactor biosynthesis; coenzyme F420 biosynthesis. In terms of biological role, guanylyltransferase that catalyzes the activation of phosphoenolpyruvate (PEP) as enolpyruvoyl-2-diphospho-5'-guanosine, via the condensation of PEP with GTP. It is involved in the biosynthesis of coenzyme F420, a hydride carrier cofactor. The protein is Phosphoenolpyruvate guanylyltransferase of Roseiflexus castenholzii (strain DSM 13941 / HLO8).